We begin with the raw amino-acid sequence, 174 residues long: Crossover junction endodeoxyribonuclease RuvC (174 aa).

Catalysis depends on residues Asp-8, Glu-67, and Asp-139. Positions 8, 67, and 139 each coordinate Mg(2+).

The protein belongs to the RuvC family. In terms of assembly, homodimer which binds Holliday junction (HJ) DNA. The HJ becomes 2-fold symmetrical on binding to RuvC with unstacked arms; it has a different conformation from HJ DNA in complex with RuvA. In the full resolvosome a probable DNA-RuvA(4)-RuvB(12)-RuvC(2) complex forms which resolves the HJ. The cofactor is Mg(2+).

It localises to the cytoplasm. The enzyme catalyses Endonucleolytic cleavage at a junction such as a reciprocal single-stranded crossover between two homologous DNA duplexes (Holliday junction).. The RuvA-RuvB-RuvC complex processes Holliday junction (HJ) DNA during genetic recombination and DNA repair. Endonuclease that resolves HJ intermediates. Cleaves cruciform DNA by making single-stranded nicks across the HJ at symmetrical positions within the homologous arms, yielding a 5'-phosphate and a 3'-hydroxyl group; requires a central core of homology in the junction. The consensus cleavage sequence is 5'-(A/T)TT(C/G)-3'. Cleavage occurs on the 3'-side of the TT dinucleotide at the point of strand exchange. HJ branch migration catalyzed by RuvA-RuvB allows RuvC to scan DNA until it finds its consensus sequence, where it cleaves and resolves the cruciform DNA. The protein is Crossover junction endodeoxyribonuclease RuvC of Pseudomonas fluorescens (strain SBW25).